The following is a 796-amino-acid chain: MDVDCAETFSQPCTPLNFNPMTPSTSRVSTPVRPSSTMSARQYSGSPFKAQPQNMEPSNSRVQELREAAVGKRSYTNAWMQGTYAPPQMAGQQQRFSRPPSVIGSTMSHMTNMSEMTAYSYGGLSMLSVNTEMGEFNNFVNQAPYQRALTRVSQVSENQDPTNRQYPMTAPEIIENLESTELINQAAAIRALEPIVKAGGMLQTWGPKGAEPIIRALFQVLIPRPVENENVIRKAFEILHHSILLSNKEIRRIDRMFFRLNAALMDPNGPPVFNVPKPYSIYEIVMTRAIQLDTKFESSAMVLLVHLCCKPHFMKIFFGEDETQQSPAHRRLHKIVIEFAIGNLRRPETKSKNKGLCVSIIKNLSNKNATIKDMSERLGVVSLFHQIMQNEVIHEDLLWSTMQALTVFCGDVKNGTHFVQMGGAQVLCGLLSHGSTRLLHELLKCLRRVSDLPAIQEQDMKESIHCIVQLIGCSDVTIVELATGTLRNIGLHNKMNKAFMVQDGVTSHAIAVLRTSEQFTYQPHANIDLYRKQILSIYENCLSVLNNVTSMAPQDIKESAVSACRMISENADSAYVLLHYFNVGNRKCRKLAVTVMKRVIETVPAFADPFVDLLGTTNEPLPILLLQRAFQSLDEWRKTSVEMMNCDGRSAEQRRELDDRRKDHEDIVKRSVGLLTNLCSQANPRFFHSLKLVLTNGTLNPFQWLTHEMSDGILQEWLAFILSICSRDESLQTFMMYRFLEQAKMTEAFFAELKARRQNSNIQTMLSKIIDLGRHQQRIVSQQHQQHQMQHHRQLM.

The disordered stretch occupies residues 17 to 59; the sequence is NFNPMTPSTSRVSTPVRPSSTMSARQYSGSPFKAQPQNMEPSN. An ARM repeat occupies 462–504; it reads ESIHCIVQLIGCSDVTIVELATGTLRNIGLHNKMNKAFMVQDG.

As to quaternary structure, interacts (independently of ARM repeat) with nhr-25. Component of the beta-catenin-lit-1 complex (also called the lit-1/wrm-1 complex or the wrm-1/lit-1 kinase complex) at least composed of lit-1 and wrm-1. Interacts (via N-terminus) with lit-1; the interaction is direct and activates lit-1 kinase activity which leads to the phosphorylation of pop-1. This promotes pop-1 interaction with par-5 and translocation of pop-1 from the nucleus to the cytoplasm.

The protein resides in the cytoplasm. The protein localises to the cell cortex. It is found in the nucleus. In terms of biological role, antagonistic role in the Wnt signaling pathway that operates in embryogenesis. When located at the cortex it has been shown to inhibit Wnt signaling during asymmetric cell division but when relocated to the nucleus it shows positive regulation. Has a role in blastomere signaling during endoderm specification. Component of the beta-catenin-lit-1 complex which promotes phosphorylation, down-regulation and subcellular relocation of pop-1. Within the complex, activates lit-1-dependent kinase activity. Can substitute for bar-1 indicating functional redundancy. Appears to have a role in centrosome positioning and can activation transcription in yeast. Involved in the development of distal tip cells (DTC) by regulating the asymmetric distribution of cye-1 and cki-1 between the daughters of Z1.a and Z4.p cells. In Caenorhabditis elegans, this protein is Armadillo repeat-containing protein wrm-1.